The chain runs to 212 residues: Probable transaldolase (212 aa).

Lys-84 functions as the Schiff-base intermediate with substrate in the catalytic mechanism.

It belongs to the transaldolase family. Type 3B subfamily.

The protein localises to the cytoplasm. It catalyses the reaction D-sedoheptulose 7-phosphate + D-glyceraldehyde 3-phosphate = D-erythrose 4-phosphate + beta-D-fructose 6-phosphate. Its pathway is carbohydrate degradation; pentose phosphate pathway; D-glyceraldehyde 3-phosphate and beta-D-fructose 6-phosphate from D-ribose 5-phosphate and D-xylulose 5-phosphate (non-oxidative stage): step 2/3. Its function is as follows. Transaldolase is important for the balance of metabolites in the pentose-phosphate pathway. This is Probable transaldolase from Bacillus velezensis (strain DSM 23117 / BGSC 10A6 / LMG 26770 / FZB42) (Bacillus amyloliquefaciens subsp. plantarum).